The chain runs to 705 residues: Elongation factor G (705 aa).

The region spanning 8-290 (ERYRNFGIMA…GVVHLLPSPA (283 aa)) is the tr-type G domain. Residues 17 to 24 (AHIDAGKT), 88 to 92 (DTPGH), and 142 to 145 (NKMD) contribute to the GTP site. A disordered region spans residues 290 to 309 (ADRPPVQGIDEDEKEDTRAA).

It belongs to the TRAFAC class translation factor GTPase superfamily. Classic translation factor GTPase family. EF-G/EF-2 subfamily.

Its subcellular location is the cytoplasm. Catalyzes the GTP-dependent ribosomal translocation step during translation elongation. During this step, the ribosome changes from the pre-translocational (PRE) to the post-translocational (POST) state as the newly formed A-site-bound peptidyl-tRNA and P-site-bound deacylated tRNA move to the P and E sites, respectively. Catalyzes the coordinated movement of the two tRNA molecules, the mRNA and conformational changes in the ribosome. The chain is Elongation factor G from Xanthomonas axonopodis pv. citri (strain 306).